The primary structure comprises 366 residues: Protein-glutamate methylesterase/protein-glutamine glutaminase 2 (366 aa).

The 117-residue stretch at 3-119 (RLLIADDSAL…SLELDRLRPL (117 aa)) folds into the Response regulatory domain. Aspartate 53 is modified (4-aspartylphosphate). Residues 149 to 168 (AASSPRAKAARRGAARQRAK) are disordered. Positions 156-166 (KAARRGAARQR) are enriched in basic residues. The CheB-type methylesterase domain maps to 171–363 (PAPGLVLIGT…AAVIEWGNAD (193 aa)). Residues serine 181, histidine 208, and aspartate 305 contribute to the active site.

It belongs to the CheB family. Post-translationally, phosphorylated by CheA. Phosphorylation of the N-terminal regulatory domain activates the methylesterase activity.

Its subcellular location is the cytoplasm. It catalyses the reaction [protein]-L-glutamate 5-O-methyl ester + H2O = L-glutamyl-[protein] + methanol + H(+). The catalysed reaction is L-glutaminyl-[protein] + H2O = L-glutamyl-[protein] + NH4(+). In terms of biological role, involved in chemotaxis. Part of a chemotaxis signal transduction system that modulates chemotaxis in response to various stimuli. Catalyzes the demethylation of specific methylglutamate residues introduced into the chemoreceptors (methyl-accepting chemotaxis proteins or MCP) by CheR. Also mediates the irreversible deamidation of specific glutamine residues to glutamic acid. This is Protein-glutamate methylesterase/protein-glutamine glutaminase 2 from Rhodopseudomonas palustris (strain BisB18).